Consider the following 180-residue polypeptide: UPF0303 protein PSEEN3311 (180 aa).

It belongs to the UPF0303 family.

The chain is UPF0303 protein PSEEN3311 from Pseudomonas entomophila (strain L48).